The primary structure comprises 440 residues: Streptokinase G (440 aa).

An N-terminal signal peptide occupies residues 1-26 (MKNYLSFGMFALLFALTFGTVNSVQA).

In terms of biological role, this protein is not a protease, but it activates plasminogen by complexing with it. As a potential virulence factor, it is thought to prevent the formation of effective fibrin barriers around the site of infection, thereby contributing to the invasiveness of the cells. The sequence is that of Streptokinase G (skg) from Streptococcus sp. (strain 19909).